Here is a 196-residue protein sequence, read N- to C-terminus: ATP-dependent Clp protease proteolytic subunit (196 aa).

S96 functions as the Nucleophile in the catalytic mechanism. H121 is an active-site residue.

Belongs to the peptidase S14 family. In terms of assembly, fourteen ClpP subunits assemble into 2 heptameric rings which stack back to back to give a disk-like structure with a central cavity, resembling the structure of eukaryotic proteasomes.

It localises to the cytoplasm. The catalysed reaction is Hydrolysis of proteins to small peptides in the presence of ATP and magnesium. alpha-casein is the usual test substrate. In the absence of ATP, only oligopeptides shorter than five residues are hydrolyzed (such as succinyl-Leu-Tyr-|-NHMec, and Leu-Tyr-Leu-|-Tyr-Trp, in which cleavage of the -Tyr-|-Leu- and -Tyr-|-Trp bonds also occurs).. In terms of biological role, cleaves peptides in various proteins in a process that requires ATP hydrolysis. Has a chymotrypsin-like activity. Plays a major role in the degradation of misfolded proteins. This chain is ATP-dependent Clp protease proteolytic subunit, found in Streptococcus pyogenes serotype M3 (strain SSI-1).